A 420-amino-acid polypeptide reads, in one-letter code: Carbohydrate sulfotransferase 1 (420 aa).

A topological domain (cytoplasmic) is located at residue M1. Residues 2-23 form a helical; Signal-anchor for type II membrane protein membrane-spanning segment; the sequence is QCSWKAVILLALVSIAIQYTAI. Residues 24–420 are Lumenal-facing; it reads RTFTAKPFHI…IEDKTFIPFL (397 aa). N64 carries N-linked (GlcNAc...) asparagine glycosylation. 77–83 provides a ligand contact to 3'-phosphoadenylyl sulfate; the sequence is TRSGSSF. N-linked (GlcNAc...) asparagine glycans are attached at residues N153 and N197. 242-250 serves as a coordination point for 3'-phosphoadenylyl sulfate; that stretch reads RDPRGILSS. N-linked (GlcNAc...) asparagine glycans are attached at residues N342 and N405.

This sequence belongs to the sulfotransferase 1 family. Gal/GlcNAc/GalNAc subfamily.

It is found in the golgi apparatus membrane. The enzyme catalyses 3'-phosphoadenylyl sulfate + keratan = adenosine 3',5'-bisphosphate + keratan 6'-sulfate.. Sulfotransferase that utilizes 3'-phospho-5'-adenylyl sulfate (PAPS) as sulfonate donor to catalyze the transfer of sulfate to position 6 of galactose (Gal) residues of keratan. The chain is Carbohydrate sulfotransferase 1 (chst1) from Danio rerio (Zebrafish).